Reading from the N-terminus, the 421-residue chain is F-box only protein 9 (421 aa).

The tract at residues 1-63 is disordered; the sequence is MAESNQNTDG…AELRRRQETA (63 aa). The span at 11–20 shows a compositional bias: acidic residues; sequence AVEEGEDENT. Positions 40-52 are enriched in polar residues; sequence LQPSSGGQRSFSR. A compositionally biased stretch (basic and acidic residues) spans 54–63; that stretch reads AELRRRQETA. One copy of the TPR repeat lies at 68–101; the sequence is ARELFLKAVEEEQNGAVYEAIKYYKSAMQLVPDI. Residues 158 to 209 enclose the F-box domain; sequence QVHISALPFEVLMYIFRWVVSCDLDLRALEQLSLVCRGFYICARDPEIWRSA.

Part of the SCF (SKP1-CUL1-F-box) E3 ubiquitin-protein ligase complex SCF(fbxo9).

It localises to the cytoplasm. It participates in protein modification; protein ubiquitination. Functionally, substrate recognition component of a SCF (SKP1-CUL1-F-box protein) E3 ubiquitin-protein ligase complex which mediates the ubiquitination and subsequent proteasomal degradation of target proteins and acts as a regulator of mTOR signaling. The chain is F-box only protein 9 (fbxo9) from Danio rerio (Zebrafish).